The following is a 289-amino-acid chain: uncharacterized protein (289 aa).

Positions 1 to 20 (MNPMDRQTEGQEPQHQDRQP) are enriched in basic and acidic residues. The disordered stretch occupies residues 1 to 39 (MNPMDRQTEGQEPQHQDRQPGIESKMNPLPLSEDEDYRG). 49 to 73 (IITGGDSGIGRAAAIAFAKEGADIS) contacts NADP(+). Ser181 is a substrate binding site. The Proton acceptor role is filled by Tyr194.

Belongs to the short-chain dehydrogenases/reductases (SDR) family.

This is an uncharacterized protein from Bacillus subtilis (strain 168).